The sequence spans 220 residues: ATP-dependent Clp protease proteolytic subunit 1 (220 aa).

Residue Ser-118 is the Nucleophile of the active site. His-143 is an active-site residue.

It belongs to the peptidase S14 family. In terms of assembly, fourteen ClpP subunits assemble into 2 heptameric rings which stack back to back to give a disk-like structure with a central cavity, resembling the structure of eukaryotic proteasomes.

The protein localises to the cytoplasm. It carries out the reaction Hydrolysis of proteins to small peptides in the presence of ATP and magnesium. alpha-casein is the usual test substrate. In the absence of ATP, only oligopeptides shorter than five residues are hydrolyzed (such as succinyl-Leu-Tyr-|-NHMec, and Leu-Tyr-Leu-|-Tyr-Trp, in which cleavage of the -Tyr-|-Leu- and -Tyr-|-Trp bonds also occurs).. Functionally, cleaves peptides in various proteins in a process that requires ATP hydrolysis. Has a chymotrypsin-like activity. Plays a major role in the degradation of misfolded proteins. This is ATP-dependent Clp protease proteolytic subunit 1 from Rhodococcus jostii (strain RHA1).